The following is a 431-amino-acid chain: uncharacterized protein (431 aa).

Transmembrane regions (helical) follow at residues 33 to 53 (VARV…VIYL), 63 to 83 (FSVF…ANGL), 111 to 131 (VSGM…PLWS), 143 to 163 (VALL…LGML), 197 to 217 (LVGF…MLMT), 241 to 261 (AHSI…PVLL), 273 to 293 (GVVI…LTAM), 318 to 338 (LIGG…PWIM), 358 to 378 (AAAV…AAAL), 383 to 403 (SLGW…PLSL), and 407 to 427 (TVVA…VALA).

This sequence to M.tuberculosis Rv1510 and Rv3630.

It is found in the cell membrane. This is an uncharacterized protein from Mycobacterium bovis (strain ATCC BAA-935 / AF2122/97).